The following is a 153-amino-acid chain: Calmodulin-like protein 4 (153 aa).

EF-hand domains lie at 8 to 43 (DQIN…LGAS), 44 to 79 (PTPG…QIKQ), 81 to 116 (DPKK…LGEK), and 117 to 152 (LTHK…PVRD).

This sequence belongs to the calmodulin family. Interacts with MYO7B; the interaction mediates the association of CALML4 with the IMAC/intermicrovillar adhesion complex. Interacts with MYO7A. Expressed in the small intestine, in both mature enterocytes on the villus surface and immature cells that reside in the crypt stem-cell niche.

It is found in the cell projection. It localises to the microvillus. Functionally, as part of the intermicrovillar adhesion complex/IMAC plays a role in epithelial brush border differentiation, controlling microvilli organization and length. Acts as a light chain for MYO7B and is required for efficient targeting of the IMAC to the tips of border brush microvilli. The chain is Calmodulin-like protein 4 (Calml4) from Mus musculus (Mouse).